We begin with the raw amino-acid sequence, 514 residues long: Maturase K (514 aa).

Belongs to the intron maturase 2 family. MatK subfamily.

It is found in the plastid. It localises to the chloroplast. Its function is as follows. Usually encoded in the trnK tRNA gene intron. Probably assists in splicing its own and other chloroplast group II introns. In Lepidozamia peroffskyana (Peroffsky's lepidozamia), this protein is Maturase K.